A 234-amino-acid chain; its full sequence is Phosphoribosylaminoimidazole-succinocarboxamide synthase (234 aa).

It belongs to the SAICAR synthetase family.

It carries out the reaction 5-amino-1-(5-phospho-D-ribosyl)imidazole-4-carboxylate + L-aspartate + ATP = (2S)-2-[5-amino-1-(5-phospho-beta-D-ribosyl)imidazole-4-carboxamido]succinate + ADP + phosphate + 2 H(+). It functions in the pathway purine metabolism; IMP biosynthesis via de novo pathway; 5-amino-1-(5-phospho-D-ribosyl)imidazole-4-carboxamide from 5-amino-1-(5-phospho-D-ribosyl)imidazole-4-carboxylate: step 1/2. This Streptococcus agalactiae serotype III (strain NEM316) protein is Phosphoribosylaminoimidazole-succinocarboxamide synthase.